Reading from the N-terminus, the 246-residue chain is UPF0736 protein GK0808 (246 aa).

The protein belongs to the UPF0736 family.

In Geobacillus kaustophilus (strain HTA426), this protein is UPF0736 protein GK0808.